The sequence spans 383 residues: tRNA(Met) cytidine acetate ligase (383 aa).

ATP contacts are provided by residues 7 to 20, glycine 102, asparagine 160, and 181 to 182; these read ISEYNPFHNGHLYQ and RI.

The protein belongs to the TmcAL family.

It localises to the cytoplasm. The enzyme catalyses cytidine(34) in elongator tRNA(Met) + acetate + ATP = N(4)-acetylcytidine(34) in elongator tRNA(Met) + AMP + diphosphate. Catalyzes the formation of N(4)-acetylcytidine (ac(4)C) at the wobble position of elongator tRNA(Met), using acetate and ATP as substrates. First activates an acetate ion to form acetyladenylate (Ac-AMP) and then transfers the acetyl group to tRNA to form ac(4)C34. The polypeptide is tRNA(Met) cytidine acetate ligase (Exiguobacterium sibiricum (strain DSM 17290 / CCUG 55495 / CIP 109462 / JCM 13490 / 255-15)).